A 102-amino-acid polypeptide reads, in one-letter code: PqqA binding protein (102 aa).

The protein belongs to the PqqD family. Monomer. Interacts with PqqE.

Its pathway is cofactor biosynthesis; pyrroloquinoline quinone biosynthesis. Functionally, functions as a PqqA binding protein and presents PqqA to PqqE, in the pyrroloquinoline quinone (PQQ) biosynthetic pathway. The chain is PqqA binding protein from Rhodopseudomonas palustris (strain BisB5).